Consider the following 2090-residue polypeptide: Ninein (2090 aa).

2 consecutive EF-hand domains span residues 8-43 (QHEARLKELFDSFDTTGTGSLGQEELTDLCHMLSLE) and 42-77 (LEEVAPVLQQTLLQDNLLGRVHFDQFKEALILILSR). Position 152 is a phosphoserine (serine 152). EF-hand domains are found at residues 182 to 217 (WIEEKLQEVCEDLGITRDGHLNRKKLVSICEQYGLQ) and 219 to 252 (VDGEMLEEVFHNLDPDGTMSVEDFFYGLFKNGKS). 245-252 (GLFKNGKS) contacts GTP. Residue serine 269 is modified to Phosphoserine. Position 300 to 304 (300 to 304 (DGMGH)) interacts with GTP. An EF-hand 5 domain is found at 317–352 (EGIENSQEILKALDFSLDGNINLTELTLALENELLV). The stretch at 357–570 (IHQAALASFK…YRAQGRVLRL (214 aa)) forms a coiled coil. Residue 420 to 423 (RKLD) participates in GTP binding. The tract at residues 574-595 (NSPSEEVEANSGGIEPEHGLGS) is disordered. Coiled-coil stretches lie at residues 625–1027 (LRLE…QATS), 1068–1099 (LSLQRAHEQAVKENVKMATEISRLQQRLQKLE), 1181–1341 (SELE…SVVQ), and 1441–1816 (QDKH…AGGK). Residues 802–1505 (KMETECNRRT…HDLQITCSEM (704 aa)) are important for interaction with CEP170. Residues 1152-1190 (VRDLGSTGTSSVQRQEVKIEESEASVEGFSELENSEETR) are disordered. Residues serine 1550 and serine 1837 each carry the phosphoserine modification. Coiled-coil stretches lie at residues 1854–1885 (QENERLQTMVQNTKAELTHSREKVRQLESNLL) and 1922–2067 (ANRK…QVSL).

As to quaternary structure, homooligomer. Interacts with GSK3B/GSK3-beta via its C-terminal domain. Interacts with C14ORF166, such interaction may prevent its phosphorylation by GSK3B. Interacts with AUNIP (via N-terminus). Identified in a complex with AUNIP and AURKA. Interacts with CCDC120. Interacts (via C-terminus) with CEP250. Interacts with CEP170. Interacts with the gamma-tubulin ring complex component TUBGCP3. Interacts with gamma-tubulin. Isoform 6 does not interact with CEP170 or CEP250. Post-translationally, phosphorylated by AURKA/Aurora kinase A and PKA kinases but not CK2 or AURKB/ Aurora kinase B. Ubiquitous. Highly expressed in heart and skeletal muscle. Isoform 1 is more expressed than isoform 5.

It is found in the cytoplasm. The protein localises to the cytoskeleton. It localises to the microtubule organizing center. The protein resides in the centrosome. Its subcellular location is the centriole. Its function is as follows. Centrosomal protein required in the positioning and anchorage of the microtubule minus-end in epithelial cells. May also act as a centrosome maturation factor. May play a role in microtubule nucleation, by recruiting the gamma-tubulin ring complex to the centrosome. Overexpression does not perturb nucleation or elongation of microtubules but suppresses release of microtubules. Required for centriole organization and microtubule anchoring at the mother centriole. This chain is Ninein (NIN), found in Homo sapiens (Human).